Here is a 183-residue protein sequence, read N- to C-terminus: Nucleoside diphosphate kinase (183 aa).

Lys-11 provides a ligand contact to ATP. Residues Glu-56 to Val-88 form an insert region. ATP-binding residues include Arg-120, Thr-126, Arg-137, and Asn-157. The Pros-phosphohistidine intermediate role is filled by His-160.

Belongs to the NDK family. Requires Mg(2+) as cofactor.

The protein resides in the cytoplasm. It carries out the reaction a 2'-deoxyribonucleoside 5'-diphosphate + ATP = a 2'-deoxyribonucleoside 5'-triphosphate + ADP. It catalyses the reaction a ribonucleoside 5'-diphosphate + ATP = a ribonucleoside 5'-triphosphate + ADP. Functionally, major role in the synthesis of nucleoside triphosphates other than ATP. The ATP gamma phosphate is transferred to the NDP beta phosphate via a ping-pong mechanism, using a phosphorylated active-site intermediate. This Pyrobaculum aerophilum (strain ATCC 51768 / DSM 7523 / JCM 9630 / CIP 104966 / NBRC 100827 / IM2) protein is Nucleoside diphosphate kinase (ndk).